A 332-amino-acid chain; its full sequence is MQHLFEKLFRAESMSQEESQQLFAAIVRGELEPSQLAAVLISMKVRGETPAEIAGAAQALLADAQHFPRPDYLFADIVGTGGDGTNSINISTASAFVAASCGVKVAKHGNRSVSSRSGSSDLLAAFGIRLDMSAEQSRLALDDLGVCFLFAPQYHTGFRHAMPVRQQLKTRTLFNVLGPLINPARPPLALIGVYSPELVLPIAQTLKVLGYQRAAVVHGGGMDEVAIHAPTQVAELNNGSIESYQLTPEDFGLNRYPLAALQGGMPEENRDILARLLQGKGETAHAAAVAANVALLLKLYGQENLRHNAQQALEMIHSGQAFDRVTALAARG.

Residues Gly-79, 82–83 (GD), Ser-87, 89–92 (NIST), 107–115 (KHGNRSVSS), and Ser-119 contribute to the 5-phospho-alpha-D-ribose 1-diphosphate site. Gly-79 serves as a coordination point for anthranilate. Ser-91 contributes to the Mg(2+) binding site. Residue Asn-110 coordinates anthranilate. Position 165 (Arg-165) interacts with anthranilate. The Mg(2+) site is built by Asp-223 and Glu-224.

Belongs to the anthranilate phosphoribosyltransferase family. As to quaternary structure, homodimer. Mg(2+) is required as a cofactor.

The enzyme catalyses N-(5-phospho-beta-D-ribosyl)anthranilate + diphosphate = 5-phospho-alpha-D-ribose 1-diphosphate + anthranilate. The protein operates within amino-acid biosynthesis; L-tryptophan biosynthesis; L-tryptophan from chorismate: step 2/5. Functionally, catalyzes the transfer of the phosphoribosyl group of 5-phosphorylribose-1-pyrophosphate (PRPP) to anthranilate to yield N-(5'-phosphoribosyl)-anthranilate (PRA). This is Anthranilate phosphoribosyltransferase from Yersinia pestis bv. Antiqua (strain Antiqua).